A 398-amino-acid chain; its full sequence is NADH-quinone oxidoreductase subunit D (398 aa).

This sequence belongs to the complex I 49 kDa subunit family. In terms of assembly, NDH-1 is composed of 14 different subunits. Subunits NuoB, C, D, E, F, and G constitute the peripheral sector of the complex.

The protein resides in the cell inner membrane. The catalysed reaction is a quinone + NADH + 5 H(+)(in) = a quinol + NAD(+) + 4 H(+)(out). In terms of biological role, NDH-1 shuttles electrons from NADH, via FMN and iron-sulfur (Fe-S) centers, to quinones in the respiratory chain. The immediate electron acceptor for the enzyme in this species is believed to be ubiquinone. Couples the redox reaction to proton translocation (for every two electrons transferred, four hydrogen ions are translocated across the cytoplasmic membrane), and thus conserves the redox energy in a proton gradient. The sequence is that of NADH-quinone oxidoreductase subunit D from Bradyrhizobium sp. (strain ORS 278).